Consider the following 254-residue polypeptide: MSLTNKNVVFVAGLGGIGLDTSRELVKRNLKNLVILDRIDNPAAIAELKAINPKVTITFYPYDVTVPVAETTKLLKTIFAQVKTIDVLINGAGILDDHQIERTIAVNYTGLVNTTTAILDFWDKRKGGPGGIICNIGSVTGFNAIYQVPVYSGSKAAVVNFTSSLAKLAPITGVTAYTVNPGITRTTLVHKFNSWLDVEPRVAEKLLEHPTQTSQQCAENFVKAIELNKNGAIWKLDLGTLEPITWTQHWDSGI.

10–33 (FVAGLGGIGLDTSRELVKRNLKNL) contributes to the NAD(+) binding site. Ser138 provides a ligand contact to substrate. Tyr151 (proton acceptor) is an active-site residue.

This sequence belongs to the short-chain dehydrogenases/reductases (SDR) family. As to quaternary structure, homodimer.

It catalyses the reaction a primary alcohol + NAD(+) = an aldehyde + NADH + H(+). The enzyme catalyses a secondary alcohol + NAD(+) = a ketone + NADH + H(+). The sequence is that of Alcohol dehydrogenase (Adh) from Drosophila persimilis (Fruit fly).